The sequence spans 236 residues: Uridylate kinase (236 aa).

Residue lysine 10–glycine 13 coordinates ATP. Glycine 52 is a binding site for UMP. ATP is bound by residues glycine 53 and arginine 57. Residues aspartate 72 and threonine 133–threonine 140 contribute to the UMP site. ATP is bound by residues threonine 160, tyrosine 166, and aspartate 169.

The protein belongs to the UMP kinase family. As to quaternary structure, homohexamer.

The protein localises to the cytoplasm. It carries out the reaction UMP + ATP = UDP + ADP. It participates in pyrimidine metabolism; CTP biosynthesis via de novo pathway; UDP from UMP (UMPK route): step 1/1. Inhibited by UTP. Its function is as follows. Catalyzes the reversible phosphorylation of UMP to UDP. The sequence is that of Uridylate kinase from Cupriavidus necator (strain ATCC 17699 / DSM 428 / KCTC 22496 / NCIMB 10442 / H16 / Stanier 337) (Ralstonia eutropha).